A 537-amino-acid chain; its full sequence is Tripeptidyl aminopeptidase (537 aa).

Positions 1–36 (MRKSSIRRRATAFGTAGALVTATLIAGAVSAPAASA) are cleaved as a signal peptide. The propeptide occupies 37 to 39 (APA). One can recognise an AB hydrolase-1 domain in the interval 119-497 (GALIYNPGGP…SRLITERDAG (379 aa)). The active-site Nucleophile is S245. Residue D470 is part of the active site. H499 acts as the Proton donor in catalysis.

Belongs to the peptidase S33 family.

Its subcellular location is the secreted. Functionally, cleaves tripeptides from the N-termini of proteins. Does not cleave mono- or dipeptides, or N-terminally blocked peptides. The sequence is that of Tripeptidyl aminopeptidase from Streptomyces lividans.